Consider the following 266-residue polypeptide: Energy-coupling factor transporter ATP-binding protein EcfA1 (266 aa).

The region spanning 2-237 (IKLNNVTFRY…EKIIEIAKIA (236 aa)) is the ABC transporter domain. ATP is bound at residue 37–44 (GHNGSGKS).

This sequence belongs to the ABC transporter superfamily. Energy-coupling factor EcfA family. Forms a stable energy-coupling factor (ECF) transporter complex composed of 2 membrane-embedded substrate-binding proteins (S component), 2 ATP-binding proteins (A component) and 2 transmembrane proteins (T component).

The protein resides in the cell membrane. ATP-binding (A) component of a common energy-coupling factor (ECF) ABC-transporter complex. Unlike classic ABC transporters this ECF transporter provides the energy necessary to transport a number of different substrates. The sequence is that of Energy-coupling factor transporter ATP-binding protein EcfA1 from Mycoplasmopsis synoviae (strain 53) (Mycoplasma synoviae).